The chain runs to 431 residues: 3-phosphoshikimate 1-carboxyvinyltransferase (431 aa).

3 residues coordinate 3-phosphoshikimate: Lys20, Ser21, and Arg25. Position 20 (Lys20) interacts with phosphoenolpyruvate. Phosphoenolpyruvate-binding residues include Gly91 and Arg119. 3-phosphoshikimate-binding residues include Ser164, Gln166, Asp317, and Lys344. Gln166 contributes to the phosphoenolpyruvate binding site. Asp317 acts as the Proton acceptor in catalysis. The phosphoenolpyruvate site is built by Arg348 and Arg390.

It belongs to the EPSP synthase family. In terms of assembly, monomer.

It is found in the cytoplasm. It catalyses the reaction 3-phosphoshikimate + phosphoenolpyruvate = 5-O-(1-carboxyvinyl)-3-phosphoshikimate + phosphate. The protein operates within metabolic intermediate biosynthesis; chorismate biosynthesis; chorismate from D-erythrose 4-phosphate and phosphoenolpyruvate: step 6/7. Functionally, catalyzes the transfer of the enolpyruvyl moiety of phosphoenolpyruvate (PEP) to the 5-hydroxyl of shikimate-3-phosphate (S3P) to produce enolpyruvyl shikimate-3-phosphate and inorganic phosphate. This Aquifex aeolicus (strain VF5) protein is 3-phosphoshikimate 1-carboxyvinyltransferase.